A 163-amino-acid polypeptide reads, in one-letter code: Phosphopantetheine adenylyltransferase (163 aa).

T9 lines the substrate pocket. ATP contacts are provided by residues 9–10 (TF) and H17. Positions 41, 73, and 87 each coordinate substrate. ATP-binding positions include 88-90 (GLR), E98, and 123-129 (FSFISSS).

It belongs to the bacterial CoaD family. Homohexamer. Mg(2+) is required as a cofactor.

The protein localises to the cytoplasm. The enzyme catalyses (R)-4'-phosphopantetheine + ATP + H(+) = 3'-dephospho-CoA + diphosphate. The protein operates within cofactor biosynthesis; coenzyme A biosynthesis; CoA from (R)-pantothenate: step 4/5. Its function is as follows. Reversibly transfers an adenylyl group from ATP to 4'-phosphopantetheine, yielding dephospho-CoA (dPCoA) and pyrophosphate. The chain is Phosphopantetheine adenylyltransferase from Desulfitobacterium hafniense (strain DSM 10664 / DCB-2).